The following is a 602-amino-acid chain: PEX5-related protein (602 aa).

Disordered stretches follow at residues 94 to 140 (VSQT…PETS) and 167 to 206 (HLMA…LNSE). Phosphoserine is present on residues Ser-181, Ser-229, Ser-233, and Ser-237. 3 TPR repeats span residues 302-335 (WPGA…DPGN), 336-369 (AEAW…QPNN), and 371-403 (KALM…NPKY). A phosphoserine mark is found at Ser-421 and Ser-423. 3 TPR repeats span residues 450 to 483 (PDLQ…RPED), 485 to 517 (SLWN…QPGF), and 519 to 551 (RSRY…QRKS).

It belongs to the peroxisomal targeting signal receptor family. Forms an obligate 4:4 complex with HCN2. Interacts with RAB8B. Interacts with HCN3. Interacts with HCN4 with a 4:4 HCN4:PEX5L stoichiometry; reduces the effects of cAMP on the voltage-dependence and rate of activation of HCN4. Brain specific.

It localises to the cytoplasm. It is found in the membrane. Functionally, accessory subunit of hyperpolarization-activated cyclic nucleotide-gated (HCN) channels, regulating their cell-surface expression and cyclic nucleotide dependence. This is PEX5-related protein (Pex5l) from Rattus norvegicus (Rat).